The chain runs to 319 residues: MNIILTNPRGFCAGVKRAILIVENALKVYKKTIYIRHELVHNQYVINTLRQKGVVFVEKIEQIPDYSVVIFSAHGVSKKVVQEAVKKKLIILDATCPLVEKVHIEVSKSSEKAIETILIGHRGHPEVEGTIGQYNNKNGKIYLVESIEDVHNLSVQNSKKLNFFTQTTLSITNTKKIIAALKNKFPEISGPNKEDICYATTNRQIAVRQLSKIADIIFVIGSNNSSNSNRLAELGKETGTFTKLISSFLDIKKKWLKNVNYIGITAGASAPEILVTEVIQYLRKIGAHKPIEMIGVREKKIFKIPKKLLNIKTILDENG.

C12 is a [4Fe-4S] cluster binding site. The (2E)-4-hydroxy-3-methylbut-2-enyl diphosphate site is built by H41 and H74. The dimethylallyl diphosphate site is built by H41 and H74. 2 residues coordinate isopentenyl diphosphate: H41 and H74. C96 serves as a coordination point for [4Fe-4S] cluster. A (2E)-4-hydroxy-3-methylbut-2-enyl diphosphate-binding site is contributed by H124. H124 lines the dimethylallyl diphosphate pocket. H124 provides a ligand contact to isopentenyl diphosphate. E126 functions as the Proton donor in the catalytic mechanism. T167 is a (2E)-4-hydroxy-3-methylbut-2-enyl diphosphate binding site. C197 serves as a coordination point for [4Fe-4S] cluster. Residues S225, S226, N227, and S269 each coordinate (2E)-4-hydroxy-3-methylbut-2-enyl diphosphate. Residues S225, S226, N227, and S269 each contribute to the dimethylallyl diphosphate site. Residues S225, S226, N227, and S269 each coordinate isopentenyl diphosphate.

It belongs to the IspH family. As to quaternary structure, homodimer. [4Fe-4S] cluster is required as a cofactor.

It carries out the reaction isopentenyl diphosphate + 2 oxidized [2Fe-2S]-[ferredoxin] + H2O = (2E)-4-hydroxy-3-methylbut-2-enyl diphosphate + 2 reduced [2Fe-2S]-[ferredoxin] + 2 H(+). It catalyses the reaction dimethylallyl diphosphate + 2 oxidized [2Fe-2S]-[ferredoxin] + H2O = (2E)-4-hydroxy-3-methylbut-2-enyl diphosphate + 2 reduced [2Fe-2S]-[ferredoxin] + 2 H(+). It participates in isoprenoid biosynthesis; dimethylallyl diphosphate biosynthesis; dimethylallyl diphosphate from (2E)-4-hydroxy-3-methylbutenyl diphosphate: step 1/1. It functions in the pathway isoprenoid biosynthesis; isopentenyl diphosphate biosynthesis via DXP pathway; isopentenyl diphosphate from 1-deoxy-D-xylulose 5-phosphate: step 6/6. Catalyzes the conversion of 1-hydroxy-2-methyl-2-(E)-butenyl 4-diphosphate (HMBPP) into a mixture of isopentenyl diphosphate (IPP) and dimethylallyl diphosphate (DMAPP). Acts in the terminal step of the DOXP/MEP pathway for isoprenoid precursor biosynthesis. The chain is 4-hydroxy-3-methylbut-2-enyl diphosphate reductase from Buchnera aphidicola subsp. Acyrthosiphon pisum (strain Tuc7).